Reading from the N-terminus, the 369-residue chain is Serpentine receptor class epsilon-2 (369 aa).

At 1-20 (MLIQYHKISNNDPNRIQLLS) the chain is on the extracellular side. The helical transmembrane segment at 21 to 41 (MIFCEIILLIFELFEFAAIIF) threads the bilayer. Topologically, residues 42–55 (NMSRYQFHFNLKVV) are cytoplasmic. Residues 56–76 (VGYAIFAYWFDIIARITIAFF) traverse the membrane as a helical segment. Topologically, residues 77-118 (EIGLFNLDDQTIAVETEKLPWNYKNMFFMLLFCCSTYRVYFM) are extracellular. A helical transmembrane segment spans residues 119–139 (FLICSVTLLLAVERFLATIWV). The Cytoplasmic segment spans residues 140 to 148 (STYESVQHK). The helical transmembrane segment at 149 to 169 (WVSIVLTSTNSIAGIFGSLLF) threads the bilayer. At 170–178 (HYELIFDTA) the chain is on the extracellular side. The chain crosses the membrane as a helical span at residues 179 to 199 (VWCSLGLCFNFVSIFLYVILF). Residues 200–234 (NSNKSKIELCQTREITQSYTLSLRFQLNENLKIMN) lie on the Cytoplasmic side of the membrane. The chain crosses the membrane as a helical span at residues 235-255 (WIKNSILVVTCFNTLLAGFLI). At 256 to 274 (ASNNEYLKNDYPVLVKCCH) the chain is on the extracellular side. Residues 275–295 (TFLNLGIAIYAQVVFFVAILA) form a helical membrane-spanning segment. Over 296-369 (DRHFRTYFLR…VAKKKRFWRV (74 aa)) the chain is Cytoplasmic.

This sequence belongs to the nematode receptor-like protein sre family.

It is found in the cell membrane. In Caenorhabditis elegans, this protein is Serpentine receptor class epsilon-2 (sre-2).